Consider the following 436-residue polypeptide: Tol-Pal system protein TolB (436 aa).

A signal peptide spans 1-28 (MRSFLKPLLTIAAMALGMTAVIPMPAWA).

This sequence belongs to the TolB family. As to quaternary structure, the Tol-Pal system is composed of five core proteins: the inner membrane proteins TolA, TolQ and TolR, the periplasmic protein TolB and the outer membrane protein Pal. They form a network linking the inner and outer membranes and the peptidoglycan layer.

It localises to the periplasm. In terms of biological role, part of the Tol-Pal system, which plays a role in outer membrane invagination during cell division and is important for maintaining outer membrane integrity. The polypeptide is Tol-Pal system protein TolB (Mesorhizobium japonicum (strain LMG 29417 / CECT 9101 / MAFF 303099) (Mesorhizobium loti (strain MAFF 303099))).